A 187-amino-acid polypeptide reads, in one-letter code: MSLNQISKVYATALLELAQEANSLESTEEELSSLVGVFFSDDTIRHYFLSPLVDPSEKEQTAAKSVQGKASEIVANFITLVVRKNRFLYLKDILEDYRSGVDRLKNRSSLRIVSKDSLGKEAVDQITKSISSKFGREVRVTEHTDLNLIGGFKIYIDDFLIDASIRAKLAGTREALLQKKIPVGAFE.

Belongs to the ATPase delta chain family. As to quaternary structure, F-type ATPases have 2 components, F(1) - the catalytic core - and F(0) - the membrane proton channel. F(1) has five subunits: alpha(3), beta(3), gamma(1), delta(1), epsilon(1). F(0) has three main subunits: a(1), b(2) and c(10-14). The alpha and beta chains form an alternating ring which encloses part of the gamma chain. F(1) is attached to F(0) by a central stalk formed by the gamma and epsilon chains, while a peripheral stalk is formed by the delta and b chains.

It localises to the cell inner membrane. Its function is as follows. F(1)F(0) ATP synthase produces ATP from ADP in the presence of a proton or sodium gradient. F-type ATPases consist of two structural domains, F(1) containing the extramembraneous catalytic core and F(0) containing the membrane proton channel, linked together by a central stalk and a peripheral stalk. During catalysis, ATP synthesis in the catalytic domain of F(1) is coupled via a rotary mechanism of the central stalk subunits to proton translocation. In terms of biological role, this protein is part of the stalk that links CF(0) to CF(1). It either transmits conformational changes from CF(0) to CF(1) or is implicated in proton conduction. The chain is ATP synthase subunit delta from Leptospira biflexa serovar Patoc (strain Patoc 1 / Ames).